The chain runs to 148 residues: D-aminoacyl-tRNA deacylase (148 aa).

The Gly-cisPro motif, important for rejection of L-amino acids motif lies at 137-138; it reads GP.

The protein belongs to the DTD family. In terms of assembly, homodimer.

It is found in the cytoplasm. The enzyme catalyses glycyl-tRNA(Ala) + H2O = tRNA(Ala) + glycine + H(+). The catalysed reaction is a D-aminoacyl-tRNA + H2O = a tRNA + a D-alpha-amino acid + H(+). Its function is as follows. An aminoacyl-tRNA editing enzyme that deacylates mischarged D-aminoacyl-tRNAs. Also deacylates mischarged glycyl-tRNA(Ala), protecting cells against glycine mischarging by AlaRS. Acts via tRNA-based rather than protein-based catalysis; rejects L-amino acids rather than detecting D-amino acids in the active site. By recycling D-aminoacyl-tRNA to D-amino acids and free tRNA molecules, this enzyme counteracts the toxicity associated with the formation of D-aminoacyl-tRNA entities in vivo and helps enforce protein L-homochirality. The sequence is that of D-aminoacyl-tRNA deacylase from Ligilactobacillus salivarius (strain UCC118) (Lactobacillus salivarius).